The sequence spans 298 residues: Small ribosomal subunit protein uS2 (298 aa).

2 stretches are compositionally biased toward basic and acidic residues: residues Q237–K259 and P280–G298. Residues Q237 to G298 are disordered.

It belongs to the universal ribosomal protein uS2 family.

This chain is Small ribosomal subunit protein uS2, found in Neorickettsia sennetsu (strain ATCC VR-367 / Miyayama) (Ehrlichia sennetsu).